A 95-amino-acid polypeptide reads, in one-letter code: Large ribosomal subunit protein bL27 (95 aa).

A disordered region spans residues 1–21; sequence MAHKKGASSSRNGRDSNAQRL. The span at 7 to 19 shows a compositional bias: polar residues; it reads ASSSRNGRDSNAQ.

It belongs to the bacterial ribosomal protein bL27 family.

This chain is Large ribosomal subunit protein bL27, found in Parafrankia sp. (strain EAN1pec).